The sequence spans 102 residues: NADH-quinone oxidoreductase subunit K (102 aa).

3 helical membrane-spanning segments follow: residues 6 to 26, 30 to 50, and 62 to 82; these read LEHGLAVAGVLFCLGLVGLMV, ILFVLMSLEIMMNAAALAFVV, and VMFILVISLAAAEASIGLAIL.

It belongs to the complex I subunit 4L family. In terms of assembly, NDH-1 is composed of 13 different subunits. Subunits NuoA, H, J, K, L, M, N constitute the membrane sector of the complex.

The protein resides in the cell inner membrane. It catalyses the reaction a quinone + NADH + 5 H(+)(in) = a quinol + NAD(+) + 4 H(+)(out). NDH-1 shuttles electrons from NADH, via FMN and iron-sulfur (Fe-S) centers, to quinones in the respiratory chain. The immediate electron acceptor for the enzyme in this species is believed to be ubiquinone. Couples the redox reaction to proton translocation (for every two electrons transferred, four hydrogen ions are translocated across the cytoplasmic membrane), and thus conserves the redox energy in a proton gradient. This chain is NADH-quinone oxidoreductase subunit K, found in Pseudomonas syringae pv. syringae (strain B728a).